A 98-amino-acid chain; its full sequence is ESAT-6-like protein EsxK (98 aa).

This sequence belongs to the WXG100 family. CFP-10 subfamily. In terms of assembly, strongly interacts with EsxL to form a heterodimeric complex under reducing conditions.

The protein localises to the secreted. The chain is ESAT-6-like protein EsxK from Mycobacterium tuberculosis (strain CDC 1551 / Oshkosh).